Consider the following 348-residue polypeptide: D-erythrose-4-phosphate dehydrogenase (348 aa).

Residues 12–13 and R81 contribute to the NAD(+) site; that span reads RI. Residues 154–156, R200, 213–214, and R236 each bind substrate; these read SCT and TK. C155 functions as the Nucleophile in the catalytic mechanism. N318 lines the NAD(+) pocket.

This sequence belongs to the glyceraldehyde-3-phosphate dehydrogenase family. Epd subfamily. Homotetramer.

It localises to the cytoplasm. It catalyses the reaction D-erythrose 4-phosphate + NAD(+) + H2O = 4-phospho-D-erythronate + NADH + 2 H(+). The protein operates within cofactor biosynthesis; pyridoxine 5'-phosphate biosynthesis; pyridoxine 5'-phosphate from D-erythrose 4-phosphate: step 1/5. Catalyzes the NAD-dependent conversion of D-erythrose 4-phosphate to 4-phosphoerythronate. This chain is D-erythrose-4-phosphate dehydrogenase, found in Salmonella gallinarum (strain 287/91 / NCTC 13346).